A 139-amino-acid polypeptide reads, in one-letter code: Probable disulfide formation protein C 1 (139 aa).

Residues 8-27 (EYALFTAWGASFIATLGSLY) traverse the membrane as a helical segment. Cysteine 37 and cysteine 40 are disulfide-bonded. The next 2 helical transmembrane spans lie at 42 to 61 (YQRIFMYPFVLWLGIAVVKK) and 68 to 85 (YSLPIASIGACISLYHYV). A disulfide bridge links cysteine 99 with cysteine 104. Residues 113 to 135 (GFVTIPFLALIGFITIAVCSFIV) traverse the membrane as a helical segment.

Belongs to the DsbB family. BdbC subfamily.

It is found in the cell membrane. Functionally, required for disulfide bond formation in some proteins. This chain is Probable disulfide formation protein C 1 (bdbC1), found in Bacillus anthracis.